Consider the following 670-residue polypeptide: Probable urocanate hydratase (670 aa).

NAD(+) contacts are provided by residues 126 to 127, Gln-204, 250 to 252, Glu-270, 316 to 317, 338 to 342, 349 to 350, Tyr-398, and Gly-590; these read GG, GMS, NV, QTSLH, and FY.

This sequence belongs to the urocanase family. NAD(+) is required as a cofactor.

It carries out the reaction 4-imidazolone-5-propanoate = trans-urocanate + H2O. It functions in the pathway amino-acid degradation; L-histidine degradation into L-glutamate; N-formimidoyl-L-glutamate from L-histidine: step 2/3. The protein is Probable urocanate hydratase of Caenorhabditis elegans.